We begin with the raw amino-acid sequence, 35 residues long: Dolichyl-diphosphooligosaccharide--protein glycosyltransferase subunit 4C (35 aa).

Residues 1–8 (MFDDQDLG) lie on the Lumenal side of the membrane. A helical membrane pass occupies residues 9–29 (FFANFLGIFIFILVIAYHFVM). Residues 30-35 (ADPKFE) are Cytoplasmic-facing.

Belongs to the OST4 family. In terms of assembly, component of the oligosaccharyltransferase (OST) complex.

Its subcellular location is the endoplasmic reticulum membrane. In terms of biological role, subunit of the oligosaccharyl transferase (OST) complex that catalyzes the initial transfer of a defined glycan (Glc(3)Man(9)GlcNAc(2) in eukaryotes) from the lipid carrier dolichol-pyrophosphate to an asparagine residue within an Asn-X-Ser/Thr consensus motif in nascent polypeptide chains, the first step in protein N-glycosylation. N-glycosylation occurs cotranslationally and the complex associates with the Sec61 complex at the channel-forming translocon complex that mediates protein translocation across the endoplasmic reticulum (ER). All subunits are required for a maximal enzyme activity. This is Dolichyl-diphosphooligosaccharide--protein glycosyltransferase subunit 4C (OST4C) from Arabidopsis thaliana (Mouse-ear cress).